Consider the following 334-residue polypeptide: tRNA uridine(34) hydroxylase (334 aa).

Residues 123 to 217 (SDPDVILVDT…YLEEVKAEES (95 aa)) enclose the Rhodanese domain. C177 functions as the Cysteine persulfide intermediate in the catalytic mechanism.

The protein belongs to the TrhO family.

The enzyme catalyses uridine(34) in tRNA + AH2 + O2 = 5-hydroxyuridine(34) in tRNA + A + H2O. Its function is as follows. Catalyzes oxygen-dependent 5-hydroxyuridine (ho5U) modification at position 34 in tRNAs. The chain is tRNA uridine(34) hydroxylase from Shewanella baltica (strain OS195).